A 107-amino-acid chain; its full sequence is BolA-like protein 3 (107 aa).

The protein belongs to the BolA/IbaG family. As to quaternary structure, interacts with NFU1. In terms of tissue distribution, widely expressed.

The protein localises to the mitochondrion. In terms of biological role, acts as a mitochondrial iron-sulfur (Fe-S) cluster assembly factor that facilitates (Fe-S) cluster insertion into a subset of mitochondrial proteins. Probably acts together with NFU1. This is BolA-like protein 3 from Homo sapiens (Human).